A 164-amino-acid polypeptide reads, in one-letter code: Phosphopantetheine adenylyltransferase (164 aa).

Residue Ser-9 participates in substrate binding. Residues 9–10 (SF) and His-17 contribute to the ATP site. Residues Lys-41, Val-78, and Arg-92 each coordinate substrate. ATP is bound by residues 93–95 (GLR), Glu-103, and 128–134 (SRPITAT).

Belongs to the bacterial CoaD family. Homohexamer. It depends on Mg(2+) as a cofactor.

It is found in the cytoplasm. The catalysed reaction is (R)-4'-phosphopantetheine + ATP + H(+) = 3'-dephospho-CoA + diphosphate. It participates in cofactor biosynthesis; coenzyme A biosynthesis; CoA from (R)-pantothenate: step 4/5. Reversibly transfers an adenylyl group from ATP to 4'-phosphopantetheine, yielding dephospho-CoA (dPCoA) and pyrophosphate. The polypeptide is Phosphopantetheine adenylyltransferase (Sinorhizobium fredii (strain NBRC 101917 / NGR234)).